The sequence spans 472 residues: Glutamate--tRNA ligase 2 (472 aa).

Positions 10-20 (PSPTGYLHIGG) match the 'HIGH' region motif. Zn(2+)-binding residues include Cys-99, Cys-101, Cys-126, and Asp-128. The segment covering 112–130 (EQQARKEKPRYDGRCRDLD) has biased composition (basic and acidic residues). The tract at residues 112–137 (EQQARKEKPRYDGRCRDLDGPPSEEV) is disordered. The 'KMSKS' region signature appears at 240–244 (RLSKR). An ATP-binding site is contributed by Lys-243.

It belongs to the class-I aminoacyl-tRNA synthetase family. Glutamate--tRNA ligase type 1 subfamily. Monomer. Requires Zn(2+) as cofactor.

The protein localises to the cytoplasm. It carries out the reaction tRNA(Glu) + L-glutamate + ATP = L-glutamyl-tRNA(Glu) + AMP + diphosphate. Functionally, catalyzes the attachment of glutamate to tRNA(Glu) in a two-step reaction: glutamate is first activated by ATP to form Glu-AMP and then transferred to the acceptor end of tRNA(Glu). This Halorhodospira halophila (strain DSM 244 / SL1) (Ectothiorhodospira halophila (strain DSM 244 / SL1)) protein is Glutamate--tRNA ligase 2.